The primary structure comprises 379 residues: Cell division protein FtsZ (379 aa).

Residues 18 to 22 (GGGVN), 105 to 107 (GTG), Glu-136, Arg-140, and Asp-184 each bind GTP.

The protein belongs to the FtsZ family. Homodimer. Polymerizes to form a dynamic ring structure in a strictly GTP-dependent manner. Interacts directly with several other division proteins.

The protein resides in the cytoplasm. In terms of biological role, essential cell division protein that forms a contractile ring structure (Z ring) at the future cell division site. The regulation of the ring assembly controls the timing and the location of cell division. One of the functions of the FtsZ ring is to recruit other cell division proteins to the septum to produce a new cell wall between the dividing cells. Binds GTP and shows GTPase activity. This Mycobacterium bovis (strain ATCC BAA-935 / AF2122/97) protein is Cell division protein FtsZ.